The following is a 614-amino-acid chain: FAD-dependent monooxygenase terD (614 aa).

The N-terminal stretch at 1-23 (MSSKFDVVICGSGTAGLAAATWL) is a signal peptide. FAD contacts are provided by residues 6–35 (DVVI…ILES), Q44, V137, and 239–241 (RVY). Residue N260 is glycosylated (N-linked (GlcNAc...) asparagine). Y282 and D303 together coordinate FAD. N-linked (GlcNAc...) asparagine glycosylation occurs at N317. S319 contacts FAD. A glycan (N-linked (GlcNAc...) asparagine) is linked at N602.

Belongs to the PheA/TfdB FAD monooxygenase family. It depends on FAD as a cofactor.

It participates in secondary metabolite biosynthesis. Its function is as follows. FAD-dependent monooxygenase; part of the gene cluster that mediates the biosynthesis of terrein, a fungal metabolite with ecological, antimicrobial, antiproliferative, and antioxidative activities. The first step in the pathway is performed by the polyketide synthase terA that produces 4-hydroxy-6-methylpyranon (4-HMP), orsellinic acid (OA), and 2,3-dehydro-6-hydroxymellein (2,3-dehydro-6-HM) by condensing acetyl-CoA with two, three, or four malonyl-CoA units, respectively. 4-HMP and OA are not pathway intermediates, but are rather shunt or side products. 2,3-dehydro-6-HM is further converted to 6-hydroxymellein (6-HM) by the 6-hydroxymellein synthase terB. The monooxygenases terC and terD, the multicopper oxidase terE and the Kelch-like protein terF are then involved in the transformation of 6-HM to terrein. Even if they are co-regulated with the other terrein cluster genes, terH and terI seem to be dispensable for terrein production; whereas one or both of the 2 transporters terG and terJ are probably required for efficient secretion of metabolites. This chain is FAD-dependent monooxygenase terD, found in Aspergillus terreus (strain NIH 2624 / FGSC A1156).